Here is a 337-residue protein sequence, read N- to C-terminus: Ribonucleoside-diphosphate reductase small subunit (337 aa).

A disordered region spans residues 1-22; sequence MDPAVSPASTDPLDTHASGAGA. The Fe cation site is built by Asp91, Glu121, and His124. Tyr128 is a catalytic residue. The chain crosses the membrane as a helical span at residues 177–197; that stretch reads FILMILIEGVFFAASFAAIAY. Fe cation contacts are provided by Glu184, Glu218, and His221.

It belongs to the ribonucleoside diphosphate reductase small chain family. As to quaternary structure, heterotetramer composed of a homodimer of the large subunit (R1) and a homodimer of the small subunit (R2). Larger multisubunit protein complex are also active, composed of (R1)n(R2)n. Fe cation is required as a cofactor.

The protein localises to the host membrane. It catalyses the reaction a 2'-deoxyribonucleoside 5'-diphosphate + [thioredoxin]-disulfide + H2O = a ribonucleoside 5'-diphosphate + [thioredoxin]-dithiol. In terms of biological role, ribonucleoside-diphosphate reductase holoenzyme provides the precursors necessary for viral DNA synthesis. Allows virus growth in non-dividing cells, as well as reactivation from latency in infected hosts. Catalyzes the biosynthesis of deoxyribonucleotides from the corresponding ribonucleotides. The protein is Ribonucleoside-diphosphate reductase small subunit of Human herpesvirus 2 (strain 333) (HHV-2).